The chain runs to 37 residues: Large ribosomal subunit protein bL36 (37 aa).

The protein belongs to the bacterial ribosomal protein bL36 family.

This chain is Large ribosomal subunit protein bL36, found in Synechococcus sp. (strain WH7803).